A 172-amino-acid chain; its full sequence is Monopolar attachment protein 1 (172 aa).

Residues 15–30 (KKNKNPKISNSKKKNS) are compositionally biased toward basic residues. The disordered stretch occupies residues 15–43 (KKNKNPKISNSKKKNSTRPALQDKTNQTL). Residues 31-43 (TRPALQDKTNQTL) show a composition bias toward polar residues. A POLO box domain (PBD)-binding motif is present at residues 100-102 (STP).

Interacts with rec8, Interacts with plo1.

Its subcellular location is the nucleus. The protein localises to the chromosome. It localises to the centromere. It is found in the kinetochore. Plays an important role in chromosome segregation during meiosis I by allowing meiotic rec8 to establish cohesion at the centromeric central core and thereby promote the side-by-side structure of kinetochores at meiosis I. Enables monopolar attachment during meiosis I. Required to facilitate kinetochore mono-orientation during meiosis I, when kinetochores on sister chromosomes face the same direction and are thus captured and pulled by spindle fibers from the same pole. Acts in collaboration with plo1. The protein is Monopolar attachment protein 1 (moa1) of Schizosaccharomyces pombe (strain 972 / ATCC 24843) (Fission yeast).